Here is a 125-residue protein sequence, read N- to C-terminus: U-scoloptoxin(05)-Er1a (125 aa).

A signal peptide spans 1–20; sequence MLSLGVSIFLLVFLIPENSG.

The protein belongs to the scoloptoxin-05 family. In terms of processing, contains 4 disulfide bonds. Expressed by the venom gland.

The protein localises to the secreted. The chain is U-scoloptoxin(05)-Er1a from Ethmostigmus rubripes (Giant centipede).